Here is a 281-residue protein sequence, read N- to C-terminus: Ras-related protein Rab-40C (281 aa).

S23, G26, K27, and S46 together coordinate GTP. Residues 41–49 (SPYAYSNGI) form a switch-I region. Mg(2+) is bound by residues S46 and D69. 3 residues coordinate GTP: G72, N126, and R127. The tract at residues 72–88 (GQGRFCTIFRSYSRGAQ) is switch-II. The SOCS box domain maps to 175–228 (LMRHGMEKIWRPNRVFSLQDLCCRAIVSCTPVHLIDKLPLPVTIKSHLKSFSMA). A disordered region spans residues 245-281 (SGAGGGGSKGNSLKRSKSIRPPQSPPQNCSRSNCKIS). Over residues 270 to 281 (PQNCSRSNCKIS) the composition is skewed to polar residues. Residue C273 is the site of S-palmitoyl cysteine attachment. Residue C278 is the site of S-geranylgeranyl cysteine attachment.

It belongs to the small GTPase superfamily. Rab family. In terms of assembly, component of the cullin-5-RING E3 ubiquitin-protein ligase complex (ECS(RAB40C) complex) composed of CUL5, Elongin BC (ELOB and ELOC), RNF7/RBX2 and RAB40C. Interacts with protein phosphatase 6 (PP6) complex components ANKRD28, ANKRD52, PPP6C, PP6R1 and PP6R2; the interaction leads to ANKRD28 ubiquitination and decreased PP6 activity. Interacts with DAB2IP; DAB2IP acts as a GAP for RAB40C. Mg(2+) serves as cofactor.

It localises to the cell membrane. The protein resides in the cytoplasm. The protein localises to the cytosol. It is found in the golgi apparatus membrane. It catalyses the reaction GTP + H2O = GDP + phosphate + H(+). It participates in protein modification; protein ubiquitination. Regulated by guanine nucleotide exchange factors (GEFs) which promote the exchange of bound GDP for free GTP. Regulated by GTPase activating proteins (GAPs) including DAB2IP, which increase the GTP hydrolysis activity. Inhibited by GDP dissociation inhibitors (GDIs). Functionally, RAB40C small GTPase acts as substrate-recognition component of the ECS(RAB40C) E3 ubiquitin ligase complex which mediates the ubiquitination and subsequent proteasomal degradation of target proteins. The Rab40 subfamily belongs to the Rab family that are key regulators of intracellular membrane trafficking, from the formation of transport vesicles to their fusion with membranes. Rabs cycle between an inactive GDP-bound form and an active GTP-bound form that is able to recruit to membranes different sets of downstream effectors directly responsible for vesicle formation, movement, tethering and fusion. As part of the ECS(RAB40C) complex, mediates ANKRD28 ubiquitination and degradation, thereby inhibiting protein phosphatase 6 (PP6) complex activity and focal adhesion assembly during cell migration. Also negatively regulate lipid droplets accumulation in a GTP-dependent manner. The protein is Ras-related protein Rab-40C of Homo sapiens (Human).